The following is a 472-amino-acid chain: Na(+)/H(+) antiporter NhaA (472 aa).

11 helical membrane passes run 48-68 (AGGI…NSAW), 91-111 (MSLH…VVGL), 129-149 (ALPV…YFAV), 157-177 (AGWG…LVLL), 185-205 (LIIF…LVIA), 210-230 (HEIS…LLLL), 237-257 (HAIP…HSGV), 337-357 (GPWV…GIDF), 374-394 (VCLG…WIAV), 410-430 (LLGV…ISQL), and 443-463 (LGIL…LYFG).

The protein belongs to the NhaA Na(+)/H(+) (TC 2.A.33) antiporter family.

The protein localises to the cell inner membrane. The enzyme catalyses Na(+)(in) + 2 H(+)(out) = Na(+)(out) + 2 H(+)(in). Functionally, na(+)/H(+) antiporter that extrudes sodium in exchange for external protons. This Syntrophobacter fumaroxidans (strain DSM 10017 / MPOB) protein is Na(+)/H(+) antiporter NhaA.